A 129-amino-acid polypeptide reads, in one-letter code: Small ribosomal subunit protein uS11 (129 aa).

It belongs to the universal ribosomal protein uS11 family. In terms of assembly, part of the 30S ribosomal subunit. Interacts with proteins S7 and S18. Binds to IF-3.

Located on the platform of the 30S subunit, it bridges several disparate RNA helices of the 16S rRNA. Forms part of the Shine-Dalgarno cleft in the 70S ribosome. The sequence is that of Small ribosomal subunit protein uS11 from Lactiplantibacillus plantarum (strain ATCC BAA-793 / NCIMB 8826 / WCFS1) (Lactobacillus plantarum).